Here is a 349-residue protein sequence, read N- to C-terminus: tRNA N6-adenosine threonylcarbamoyltransferase (349 aa).

Residues His-116 and His-120 each coordinate Fe cation. Substrate contacts are provided by residues 139–143 (LVSGG), Asp-172, Gly-185, and Asn-283. Residue Asp-311 participates in Fe cation binding.

This sequence belongs to the KAE1 / TsaD family. It depends on Fe(2+) as a cofactor.

The protein resides in the cytoplasm. The enzyme catalyses L-threonylcarbamoyladenylate + adenosine(37) in tRNA = N(6)-L-threonylcarbamoyladenosine(37) in tRNA + AMP + H(+). Its function is as follows. Required for the formation of a threonylcarbamoyl group on adenosine at position 37 (t(6)A37) in tRNAs that read codons beginning with adenine. Is involved in the transfer of the threonylcarbamoyl moiety of threonylcarbamoyl-AMP (TC-AMP) to the N6 group of A37, together with TsaE and TsaB. TsaD likely plays a direct catalytic role in this reaction. In Colwellia psychrerythraea (strain 34H / ATCC BAA-681) (Vibrio psychroerythus), this protein is tRNA N6-adenosine threonylcarbamoyltransferase.